We begin with the raw amino-acid sequence, 265 residues long: 3-methyl-2-oxobutanoate hydroxymethyltransferase (265 aa).

Residues Asp-43 and Asp-82 each coordinate Mg(2+). 3-methyl-2-oxobutanoate is bound by residues 43–44, Asp-82, and Lys-111; that span reads DS. Glu-113 is a binding site for Mg(2+). Glu-180 (proton acceptor) is an active-site residue.

Belongs to the PanB family. As to quaternary structure, homodecamer; pentamer of dimers. Mg(2+) is required as a cofactor.

The protein resides in the cytoplasm. It carries out the reaction 3-methyl-2-oxobutanoate + (6R)-5,10-methylene-5,6,7,8-tetrahydrofolate + H2O = 2-dehydropantoate + (6S)-5,6,7,8-tetrahydrofolate. It functions in the pathway cofactor biosynthesis; (R)-pantothenate biosynthesis; (R)-pantoate from 3-methyl-2-oxobutanoate: step 1/2. In terms of biological role, catalyzes the reversible reaction in which hydroxymethyl group from 5,10-methylenetetrahydrofolate is transferred onto alpha-ketoisovalerate to form ketopantoate. This chain is 3-methyl-2-oxobutanoate hydroxymethyltransferase, found in Francisella tularensis subsp. holarctica (strain OSU18).